A 231-amino-acid polypeptide reads, in one-letter code: NKG2-C type II integral membrane protein (231 aa).

The span at 1 to 12 (MNKQRGTFSEVS) shows a compositional bias: polar residues. Positions 1-31 (MNKQRGTFSEVSLAQDPKRQQRKPKDNKSSI) are disordered. The Cytoplasmic segment spans residues 1–70 (MNKQRGTFSE…CQGLLPPPEK (70 aa)). Basic and acidic residues predominate over residues 16 to 28 (DPKRQQRKPKDNK). A helical; Signal-anchor for type II membrane protein transmembrane segment spans residues 71–93 (LTAEVLGIICIVLMATVLKTVVL). At 94 to 231 (IPFLEQNNSF…SKRYYCKHKL (138 aa)) the chain is on the extracellular side. Asn-100 carries an N-linked (GlcNAc...) asparagine glycan. Positions 116 to 229 (HCPEEWITYS…GSSKRYYCKH (114 aa)) constitute a C-type lectin domain. 3 cysteine pairs are disulfide-bonded: Cys-117-Cys-128, Cys-145-Cys-227, and Cys-206-Cys-219. Asn-149 carries N-linked (GlcNAc...) asparagine glycosylation.

In terms of assembly, heterodimer with KLRD1; disulfide-linked. KLRD1-KLRC2 receptor complex interacts with TYROBP/DAP12 homodimer; this interaction is necessary for the expression on the cell surface. Natural killer cells.

The protein resides in the cell membrane. In terms of biological role, immune activating receptor involved in self-nonself discrimination. In complex with KLRD1 on cytotoxic lymphocyte subsets, recognizes non-classical major histocompatibility MHC-E loaded with signal sequence-derived peptides from non-classical MHC-G molecules, likely playing a role in the generation and effector functions of adaptive natural killer (NK) cells and in maternal-fetal tolerance during pregnancy. Regulates the effector functions of terminally differentiated cytotoxic lymphocyte subsets, and in particular may play a role in adaptive NK cell response to viral infection. Upon MHC-E-peptide binding, transmits intracellular signals via the adapter protein TYROBP/DAP12, triggering the phosphorylation of proximal signaling molecules and cell activation. The protein is NKG2-C type II integral membrane protein (KLRC2) of Macaca mulatta (Rhesus macaque).